A 588-amino-acid polypeptide reads, in one-letter code: A-type ATP synthase subunit A 3 (588 aa).

An ATP-binding site is contributed by Gly-234 to Thr-241.

Belongs to the ATPase alpha/beta chains family. As to quaternary structure, has multiple subunits with at least A(3), B(3), C, D, E, F, H, I and proteolipid K(x).

It is found in the cell membrane. The catalysed reaction is ATP + H2O + 4 H(+)(in) = ADP + phosphate + 5 H(+)(out). Component of the A-type ATP synthase that produces ATP from ADP in the presence of a proton gradient across the membrane. The A chain is the catalytic subunit. This chain is A-type ATP synthase subunit A 3, found in Methanospirillum hungatei JF-1 (strain ATCC 27890 / DSM 864 / NBRC 100397 / JF-1).